The chain runs to 564 residues: Protein CPR-5 (564 aa).

Residues 1 to 87 form a disordered region; that stretch reads MEALLLPPSP…TSNSNSTKRV (87 aa). Over residues 12-28 the composition is skewed to polar residues; sequence PQNQITNPANSKPNHQS. Residues 29 to 38 show a composition bias toward basic and acidic residues; the sequence is GDVHKDETMM. Residues 69 to 84 are compositionally biased toward low complexity; the sequence is SSSYCSTSSTSNSNST. 5 helical membrane passes run 347–367, 411–431, 443–463, 472–492, and 526–546; these read IMDWLLVSVFSMLASMVLGVY, VRVWVQIFFGVLMIIVFTYFL, PISFIVLFLGIFCGVSGKLCV, LWLIVWEVFCLLQFVANVFTL, and VYVVILFVLPVINGLLPFATF.

In terms of assembly, interacts with SIM and SMR1. Ubiquitous.

It localises to the membrane. The protein localises to the nucleus membrane. May play a role in transcriptional processes. Negatively regulates the senescence and chlorotic lesions induced by biotic (e.g. pathogens) and abiotic (e.g. sugars, darkness) agents, probably by controlling programmed cell death (pcd). Negative regulator of plant programmed cell death (PCD) and effector-triggered immunity (ETI). Promotes cell division and endoreduplication (e.g. in trichomes). In Arabidopsis thaliana (Mouse-ear cress), this protein is Protein CPR-5.